The primary structure comprises 293 residues: Homoserine kinase (293 aa).

84–94 (PLSRGLGSSSA) contacts ATP.

This sequence belongs to the GHMP kinase family. Homoserine kinase subfamily.

The protein localises to the cytoplasm. It catalyses the reaction L-homoserine + ATP = O-phospho-L-homoserine + ADP + H(+). It functions in the pathway amino-acid biosynthesis; L-threonine biosynthesis; L-threonine from L-aspartate: step 4/5. In terms of biological role, catalyzes the ATP-dependent phosphorylation of L-homoserine to L-homoserine phosphate. The polypeptide is Homoserine kinase (Nautilia profundicola (strain ATCC BAA-1463 / DSM 18972 / AmH)).